The following is a 764-amino-acid chain: Thyrotropin receptor (764 aa).

Positions 1-21 are cleaved as a signal peptide; that stretch reads MSLTPLLQLALLLALPRSLRG. Residues 22–413 are Extracellular-facing; the sequence is KGCPSPPCEC…EFNPCEDIMG (392 aa). The cysteines at positions 31 and 41 are disulfide-linked. 2 N-linked (GlcNAc...) asparagine glycosylation sites follow: asparagine 77 and asparagine 99. LRR repeat units follow at residues 125 to 150, 151 to 174, 176 to 199, 201 to 223, 225 to 248, and 250 to 271; these read LPLL…VYST, DVFF…AFQG, CNET…AFNG, KLDA…AFGG, FSGP…GLEH, and KELI…SFLH. 2 N-linked (GlcNAc...) asparagine glycosylation sites follow: asparagine 177 and asparagine 198. An N-linked (GlcNAc...) asparagine glycan is attached at asparagine 302. A Sulfotyrosine modification is found at tyrosine 385. Residues 414-441 traverse the membrane as a helical segment; sequence YRFLRIVVWFVSLLALLGNVFVLVILLT. Residues 442 to 450 lie on the Cytoplasmic side of the membrane; that stretch reads SHYKLTVPR. Residues 451 to 473 form a helical membrane-spanning segment; sequence FLMCNLAFADFCMGMYLLLIASV. Residues 474–494 lie on the Extracellular side of the membrane; that stretch reads DLYTQSEYYNHAIDWQTGPGC. Residues cysteine 494 and cysteine 569 are joined by a disulfide bond. Residues 495–517 form a helical membrane-spanning segment; sequence NTAGFFTVFASELSVYTLTVITL. The Cytoplasmic segment spans residues 518–537; the sequence is ERWYAITFAMRLDRKIRLRH. The chain crosses the membrane as a helical span at residues 538–560; it reads AYAIMAGGWVCCFLLALLPLVGI. At 561 to 580 the chain is on the extracellular side; sequence SSYAKVSICLPMDTETPLAL. The helical transmembrane segment at 581 to 602 threads the bilayer; it reads AYIILVLLLNIVAFTIVCSCYV. At 603-625 the chain is on the cytoplasmic side; that stretch reads KIYITVRNPQYNPGDKDTKIAKR. A helical transmembrane segment spans residues 626-649; that stretch reads MAVLIFTDFMCMAPISFYALSALM. At 650–660 the chain is on the extracellular side; that stretch reads NKPLITVTNSK. A helical membrane pass occupies residues 661–682; the sequence is ILLVLFYPLNSCANPFLYAIFT. Topologically, residues 683-764 are cytoplasmic; it reads KAFQRDVFIL…ISKEYKQPVL (82 aa). The PDZ-binding motif lies at 762–764; the sequence is PVL.

It belongs to the G-protein coupled receptor 1 family. FSH/LSH/TSH subfamily. Interacts with heterodimer GPHA2:GPHB5; this interaction stimulates cAMP production. Interacts (via the PDZ-binding motif) with SCRIB; regulates TSHR trafficking and function. Glycosylated. In terms of processing, sulfated. Sulfation on Tyr-385 plays a role in thyrotropin receptor binding and activation. As to expression, expressed in thyroide cells (at protein level).

The protein localises to the cell membrane. The protein resides in the basolateral cell membrane. Functionally, receptor for the thyroid-stimulating hormone (TSH) or thyrotropin. Also acts as a receptor for the heterodimeric glycoprotein hormone (GPHA2:GPHB5) or thyrostimulin. The activity of this receptor is mediated by G proteins which activate adenylate cyclase. Plays a central role in controlling thyroid cell metabolism. The protein is Thyrotropin receptor (TSHR) of Sus scrofa (Pig).